The sequence spans 429 residues: Gamma-glutamyl phosphate reductase (429 aa).

It belongs to the gamma-glutamyl phosphate reductase family.

The protein localises to the cytoplasm. The catalysed reaction is L-glutamate 5-semialdehyde + phosphate + NADP(+) = L-glutamyl 5-phosphate + NADPH + H(+). Its pathway is amino-acid biosynthesis; L-proline biosynthesis; L-glutamate 5-semialdehyde from L-glutamate: step 2/2. Its function is as follows. Catalyzes the NADPH-dependent reduction of L-glutamate 5-phosphate into L-glutamate 5-semialdehyde and phosphate. The product spontaneously undergoes cyclization to form 1-pyrroline-5-carboxylate. This Bradyrhizobium sp. (strain ORS 278) protein is Gamma-glutamyl phosphate reductase.